The following is a 638-amino-acid chain: 3D-(3,5/4)-trihydroxycyclohexane-1,2-dione hydrolase (638 aa).

Glu67 is a binding site for thiamine diphosphate. A thiamine pyrophosphate binding region spans residues 442–523 (SLPGDLQRLW…INIMLFDNSG (82 aa)). Positions 494 and 521 each coordinate Mg(2+).

This sequence belongs to the TPP enzyme family. Requires Mg(2+) as cofactor. Thiamine diphosphate serves as cofactor.

It carries out the reaction 3D-3,5/4-trihydroxycyclohexane-1,2-dione + H2O = 5-deoxy-D-glucuronate + H(+). It functions in the pathway polyol metabolism; myo-inositol degradation into acetyl-CoA; acetyl-CoA from myo-inositol: step 3/7. In terms of biological role, involved in the cleavage of the C1-C2 bond of 3D-(3,5/4)-trihydroxycyclohexane-1,2-dione (THcHDO) to yield 5-deoxy-glucuronate (5DG). The sequence is that of 3D-(3,5/4)-trihydroxycyclohexane-1,2-dione hydrolase from Listeria innocua serovar 6a (strain ATCC BAA-680 / CLIP 11262).